Here is a 256-residue protein sequence, read N- to C-terminus: Imidazole glycerol phosphate synthase subunit HisF (256 aa).

Catalysis depends on residues aspartate 11 and aspartate 130.

The protein belongs to the HisA/HisF family. In terms of assembly, heterodimer of HisH and HisF.

It localises to the cytoplasm. The enzyme catalyses 5-[(5-phospho-1-deoxy-D-ribulos-1-ylimino)methylamino]-1-(5-phospho-beta-D-ribosyl)imidazole-4-carboxamide + L-glutamine = D-erythro-1-(imidazol-4-yl)glycerol 3-phosphate + 5-amino-1-(5-phospho-beta-D-ribosyl)imidazole-4-carboxamide + L-glutamate + H(+). The protein operates within amino-acid biosynthesis; L-histidine biosynthesis; L-histidine from 5-phospho-alpha-D-ribose 1-diphosphate: step 5/9. Its function is as follows. IGPS catalyzes the conversion of PRFAR and glutamine to IGP, AICAR and glutamate. The HisF subunit catalyzes the cyclization activity that produces IGP and AICAR from PRFAR using the ammonia provided by the HisH subunit. The chain is Imidazole glycerol phosphate synthase subunit HisF from Prochlorococcus marinus (strain AS9601).